The primary structure comprises 172 residues: 3-hydroxydecanoyl-[acyl-carrier-protein] dehydratase (172 aa).

Residue H71 is part of the active site.

This sequence belongs to the thioester dehydratase family. FabA subfamily. Homodimer.

The protein localises to the cytoplasm. The catalysed reaction is a (3R)-hydroxyacyl-[ACP] = a (2E)-enoyl-[ACP] + H2O. The enzyme catalyses (3R)-hydroxydecanoyl-[ACP] = (2E)-decenoyl-[ACP] + H2O. It catalyses the reaction (2E)-decenoyl-[ACP] = (3Z)-decenoyl-[ACP]. It functions in the pathway lipid metabolism; fatty acid biosynthesis. Its function is as follows. Necessary for the introduction of cis unsaturation into fatty acids. Catalyzes the dehydration of (3R)-3-hydroxydecanoyl-ACP to E-(2)-decenoyl-ACP and then its isomerization to Z-(3)-decenoyl-ACP. Can catalyze the dehydratase reaction for beta-hydroxyacyl-ACPs with saturated chain lengths up to 16:0, being most active on intermediate chain length. This chain is 3-hydroxydecanoyl-[acyl-carrier-protein] dehydratase, found in Serratia proteamaculans (strain 568).